The sequence spans 341 residues: Farnesyl pyrophosphate synthase (341 aa).

3 residues coordinate isopentenyl diphosphate: K48, R51, and Q86. Mg(2+)-binding residues include D93 and D97. Residue R102 coordinates dimethylallyl diphosphate. R103 contacts isopentenyl diphosphate. Dimethylallyl diphosphate is bound by residues K190, T191, Q229, and K246.

Belongs to the FPP/GGPP synthase family. Mg(2+) is required as a cofactor.

Its subcellular location is the cytoplasm. The catalysed reaction is isopentenyl diphosphate + dimethylallyl diphosphate = (2E)-geranyl diphosphate + diphosphate. It carries out the reaction isopentenyl diphosphate + (2E)-geranyl diphosphate = (2E,6E)-farnesyl diphosphate + diphosphate. It participates in isoprenoid biosynthesis; farnesyl diphosphate biosynthesis; farnesyl diphosphate from geranyl diphosphate and isopentenyl diphosphate: step 1/1. Its pathway is isoprenoid biosynthesis; geranyl diphosphate biosynthesis; geranyl diphosphate from dimethylallyl diphosphate and isopentenyl diphosphate: step 1/1. Catalyzes the sequential condensation of isopentenyl pyrophosphate with the allylic pyrophosphates, dimethylallyl pyrophosphate, and then with the resultant geranylpyrophosphate to the ultimate product farnesyl pyrophosphate. The protein is Farnesyl pyrophosphate synthase (FPS1) of Helianthus annuus (Common sunflower).